Reading from the N-terminus, the 361-residue chain is Peptide chain release factor 1 (361 aa).

Gln-237 bears the N5-methylglutamine mark. The interval 286 to 306 is disordered; sequence AKQDQEQAAKRKSLVGSGDRS.

It belongs to the prokaryotic/mitochondrial release factor family. Post-translationally, methylated by PrmC. Methylation increases the termination efficiency of RF1.

It localises to the cytoplasm. In terms of biological role, peptide chain release factor 1 directs the termination of translation in response to the peptide chain termination codons UAG and UAA. The chain is Peptide chain release factor 1 from Coxiella burnetii (strain CbuG_Q212) (Coxiella burnetii (strain Q212)).